A 695-amino-acid chain; its full sequence is UvrABC system protein C (695 aa).

Residues methionine 1–aspartate 10 are compositionally biased toward basic and acidic residues. Residues methionine 1 to threonine 44 are disordered. Residues threonine 88–valine 166 enclose the GIY-YIG domain. In terms of domain architecture, UVR spans arginine 276–isoleucine 311.

It belongs to the UvrC family. In terms of assembly, interacts with UvrB in an incision complex.

Its subcellular location is the cytoplasm. Functionally, the UvrABC repair system catalyzes the recognition and processing of DNA lesions. UvrC both incises the 5' and 3' sides of the lesion. The N-terminal half is responsible for the 3' incision and the C-terminal half is responsible for the 5' incision. The protein is UvrABC system protein C of Rhodopseudomonas palustris (strain HaA2).